An 846-amino-acid polypeptide reads, in one-letter code: Matrin-3 (846 aa).

S2 is subject to N-acetylserine. The residue at position 3 (K3) is an N6-acetyllysine; alternate. Residue K3 forms a Glycyl lysine isopeptide (Lys-Gly) (interchain with G-Cter in SUMO2); alternate linkage. Residues S4, S9, S14, S22, S41, S118, and S126 each carry the phosphoserine modification. Glycyl lysine isopeptide (Lys-Gly) (interchain with G-Cter in SUMO2) cross-links involve residues K132 and K146. 2 disordered regions span residues 147–174 (RRRT…YRVP) and 187–213 (DSFD…ESGY). A Phosphothreonine modification is found at T150. Phosphoserine is present on S157. A Phosphotyrosine modification is found at Y158. Positions 160–174 (RDGRSATREPPYRVP) are enriched in basic and acidic residues. Residues S164, S188, and S195 each carry the phosphoserine modification. Basic and acidic residues predominate over residues 201–213 (DYDHGSRSQESGY). A Phosphotyrosine modification is found at Y202. 3 positions are modified to phosphoserine: S206, S208, and S211. Y219 bears the Phosphotyrosine mark. A Phosphoserine modification is found at S234. Residue K245 forms a Glycyl lysine isopeptide (Lys-Gly) (interchain with G-Cter in SUMO2) linkage. S264 bears the Phosphoserine mark. A Glycyl lysine isopeptide (Lys-Gly) (interchain with G-Cter in SUMO2) cross-link involves residue K269. S275 carries the post-translational modification Phosphoserine. Positions 342-394 (PFMLQQSTNPAPGILGPPPPSFHLGGPAVGPRGNLGAGNGNLQGPRHMQKGRV) are disordered. The region spanning 398-473 (RVVHIMDFQR…KPVRVHLSQK (76 aa)) is the RRM 1 domain. Residues K478, K487, and K491 each participate in a glycyl lysine isopeptide (Lys-Gly) (interchain with G-Cter in SUMO2) cross-link. An RRM 2 domain is found at 496–571 (RVIHLSNLPH…RCVKVDLSEK (76 aa)). Residues S509 and S511 each carry the phosphoserine modification. K515 is covalently cross-linked (Glycyl lysine isopeptide (Lys-Gly) (interchain with G-Cter in SUMO2)). K522 is subject to N6-acetyllysine; alternate. K522 is covalently cross-linked (Glycyl lysine isopeptide (Lys-Gly) (interchain with G-Cter in SUMO2); alternate). S533 carries the phosphoserine modification. Glycyl lysine isopeptide (Lys-Gly) (interchain with G-Cter in SUMO2) cross-links involve residues K554 and K555. An N6-acetyllysine modification is found at K571. Residues 588–779 (KKDKSRKRSY…EDYTIPDEYR (192 aa)) form a disordered region. Phosphoserine occurs at positions 596, 598, 604, and 606. Residues 600 to 642 (DGKESPSDKKSKTDAQKTESPAEGKEQEEKSGEDGEKDTKDDQ) show a composition bias toward basic and acidic residues. Residues K616 and K629 each participate in a glycyl lysine isopeptide (Lys-Gly) (interchain with G-Cter in SUMO2) cross-link. The segment covering 652-664 (ESEDELLVDEEEA) has biased composition (acidic residues). Residues S653, S670, S672, and S673 each carry the phosphoserine modification. A compositionally biased stretch (low complexity) spans 665–675 (AALLESGSSVG). A Phosphothreonine modification is found at T678. At S688 the chain carries Phosphoserine. The segment covering 688 to 703 (SDGKKEPSDKAVKKDP) has biased composition (basic and acidic residues). The short motif at 709 to 717 (SKKKLKKVD) is the Nuclear localization signal element. Glycyl lysine isopeptide (Lys-Gly) (interchain with G-Cter in SUMO2) cross-links involve residues K718 and K735. T740 carries the post-translational modification Phosphothreonine. A phosphoserine mark is found at S746 and S758. Over residues 766–779 (DENKEDYTIPDEYR) the composition is skewed to basic and acidic residues. A Glycyl lysine isopeptide (Lys-Gly) (interchain with G-Cter in SUMO2) cross-link involves residue K769. The Matrin-type zinc-finger motif lies at 800 to 831 (FYCKLCSLFYTNEEVAKNTHCSSLPHYQKLKK). K835 carries the N6-acetyllysine; alternate modification. Residue K835 forms a Glycyl lysine isopeptide (Lys-Gly) (interchain with G-Cter in SUMO2); alternate linkage.

Part of a complex consisting of SFPQ, NONO and MATR3. Interacts with AGO1 and AGO2. Part of a complex composed at least of ASH2L, EMSY, HCFC1, HSPA8, CCAR2, MATR3, MKI67, RBBP5, TUBB2A, WDR5 and ZNF335; this complex may have a histone H3-specific methyltransferase activity. Interacts with TARDBP. Part of the HDP-RNP complex composed of at least HEXIM1, PRKDC, XRCC5, XRCC6, paraspeckle proteins (SFPQ, NONO, PSPC1, RBM14, and MATR3) and NEAT1 RNA. Interacts with FUS. Interacts with IGF2BP1. Interacts with IGF2BP2 and IGF2BP3. Interacts with RBPMS.

The protein localises to the nucleus matrix. May play a role in transcription or may interact with other nuclear matrix proteins to form the internal fibrogranular network. In association with the SFPQ-NONO heteromer may play a role in nuclear retention of defective RNAs. Plays a role in the regulation of DNA virus-mediated innate immune response by assembling into the HDP-RNP complex, a complex that serves as a platform for IRF3 phosphorylation and subsequent innate immune response activation through the cGAS-STING pathway. Binds to N6-methyladenosine (m6A)-containing mRNAs and contributes to MYC stability by binding to m6A-containing MYC mRNAs. May bind to specific miRNA hairpins. In Mus musculus (Mouse), this protein is Matrin-3 (Matr3).